Here is a 221-residue protein sequence, read N- to C-terminus: Guanylate kinase (221 aa).

Residues 20 to 199 (GLMFILSSPS…CFGKVREILA (180 aa)) enclose the Guanylate kinase-like domain. 27-34 (SPSGAGKT) lines the ATP pocket.

Belongs to the guanylate kinase family.

It is found in the cytoplasm. It catalyses the reaction GMP + ATP = GDP + ADP. Its function is as follows. Essential for recycling GMP and indirectly, cGMP. This chain is Guanylate kinase, found in Novosphingobium aromaticivorans (strain ATCC 700278 / DSM 12444 / CCUG 56034 / CIP 105152 / NBRC 16084 / F199).